The sequence spans 134 residues: Putative membrane protein insertion efficiency factor (134 aa).

Belongs to the UPF0161 family.

It is found in the cell inner membrane. In terms of biological role, could be involved in insertion of integral membrane proteins into the membrane. This chain is Putative membrane protein insertion efficiency factor, found in Rhizobium etli (strain ATCC 51251 / DSM 11541 / JCM 21823 / NBRC 15573 / CFN 42).